The primary structure comprises 727 residues: Glucans biosynthesis glucosyltransferase H (727 aa).

Residues 18–41 (SAMPNERPGAMEPQKLSKMPEGFP) are disordered. 7 helical membrane passes run 58–78 (FLVV…MGAV), 97–117 (VNFC…LILL), 278–298 (LQQF…GWWV), 408–428 (IMAY…LMLA), 460–480 (LFYI…LLLL), 496–516 (IFSV…MMFI), and 572–592 (LLAW…ISAW).

This sequence belongs to the glycosyltransferase 2 family. OpgH subfamily.

It localises to the cell inner membrane. It functions in the pathway glycan metabolism; osmoregulated periplasmic glucan (OPG) biosynthesis. Its function is as follows. Involved in the biosynthesis of osmoregulated periplasmic glucans (OPGs). This chain is Glucans biosynthesis glucosyltransferase H, found in Shewanella baltica (strain OS155 / ATCC BAA-1091).